The following is a 208-amino-acid chain: Guanylate kinase (208 aa).

The Guanylate kinase-like domain maps to 21-201; that stretch reads GRVVVLSGPS…ACAELVSLLV (181 aa). 28-35 lines the ATP pocket; it reads GPSAVGKS.

This sequence belongs to the guanylate kinase family.

The protein localises to the cytoplasm. It carries out the reaction GMP + ATP = GDP + ADP. Functionally, essential for recycling GMP and indirectly, cGMP. This is Guanylate kinase (gmk) from Mycobacterium bovis (strain ATCC BAA-935 / AF2122/97).